The following is a 483-amino-acid chain: Aspartyl/glutamyl-tRNA(Asn/Gln) amidotransferase subunit B (483 aa).

The protein belongs to the GatB/GatE family. GatB subfamily. As to quaternary structure, heterotrimer of A, B and C subunits.

It carries out the reaction L-glutamyl-tRNA(Gln) + L-glutamine + ATP + H2O = L-glutaminyl-tRNA(Gln) + L-glutamate + ADP + phosphate + H(+). The catalysed reaction is L-aspartyl-tRNA(Asn) + L-glutamine + ATP + H2O = L-asparaginyl-tRNA(Asn) + L-glutamate + ADP + phosphate + 2 H(+). Its function is as follows. Allows the formation of correctly charged Asn-tRNA(Asn) or Gln-tRNA(Gln) through the transamidation of misacylated Asp-tRNA(Asn) or Glu-tRNA(Gln) in organisms which lack either or both of asparaginyl-tRNA or glutaminyl-tRNA synthetases. The reaction takes place in the presence of glutamine and ATP through an activated phospho-Asp-tRNA(Asn) or phospho-Glu-tRNA(Gln). In Brachyspira hyodysenteriae (strain ATCC 49526 / WA1), this protein is Aspartyl/glutamyl-tRNA(Asn/Gln) amidotransferase subunit B.